A 285-amino-acid polypeptide reads, in one-letter code: Phosphatidylglycerol--prolipoprotein diacylglyceryl transferase (285 aa).

4 helical membrane passes run 26–46, 71–91, 107–127, and 133–153; these read IALH…WWYV, FVVW…VLIW, WDGG…IIWF, and INIW…IGVV. Arginine 154 is a binding site for a 1,2-diacyl-sn-glycero-3-phospho-(1'-sn-glycerol). Transmembrane regions (helical) follow at residues 194–214, 218–238, and 256–276; these read LMEG…FKAF, GTVA…SEIF, and GFTY…YAIF.

This sequence belongs to the Lgt family.

The protein localises to the cell inner membrane. It catalyses the reaction L-cysteinyl-[prolipoprotein] + a 1,2-diacyl-sn-glycero-3-phospho-(1'-sn-glycerol) = an S-1,2-diacyl-sn-glyceryl-L-cysteinyl-[prolipoprotein] + sn-glycerol 1-phosphate + H(+). The protein operates within protein modification; lipoprotein biosynthesis (diacylglyceryl transfer). Functionally, catalyzes the transfer of the diacylglyceryl group from phosphatidylglycerol to the sulfhydryl group of the N-terminal cysteine of a prolipoprotein, the first step in the formation of mature lipoproteins. The protein is Phosphatidylglycerol--prolipoprotein diacylglyceryl transferase of Bartonella bacilliformis (strain ATCC 35685 / KC583 / Herrer 020/F12,63).